Consider the following 401-residue polypeptide: Phosrestin-1 (401 aa).

It belongs to the arrestin family.

Directly interacts with light-activated rhodopsin thereby activating the phosphorylation of metarhodopsin. Inhibits the dephosphorylation of metarhodopsin. This Calliphora vicina (Blue blowfly) protein is Phosrestin-1 (ARR2).